The sequence spans 427 residues: 3-phosphoshikimate 1-carboxyvinyltransferase (427 aa).

3 residues coordinate 3-phosphoshikimate: K22, S23, and R27. K22 serves as a coordination point for phosphoenolpyruvate. The phosphoenolpyruvate site is built by G96 and R124. 3-phosphoshikimate contacts are provided by S169, S170, Q171, S197, D313, N336, and K340. Q171 serves as a coordination point for phosphoenolpyruvate. The Proton acceptor role is filled by D313. Residues R344, R386, and K411 each coordinate phosphoenolpyruvate.

Belongs to the EPSP synthase family. Monomer.

The protein resides in the cytoplasm. The catalysed reaction is 3-phosphoshikimate + phosphoenolpyruvate = 5-O-(1-carboxyvinyl)-3-phosphoshikimate + phosphate. The protein operates within metabolic intermediate biosynthesis; chorismate biosynthesis; chorismate from D-erythrose 4-phosphate and phosphoenolpyruvate: step 6/7. Catalyzes the transfer of the enolpyruvyl moiety of phosphoenolpyruvate (PEP) to the 5-hydroxyl of shikimate-3-phosphate (S3P) to produce enolpyruvyl shikimate-3-phosphate and inorganic phosphate. This is 3-phosphoshikimate 1-carboxyvinyltransferase from Shigella sonnei.